Here is a 222-residue protein sequence, read N- to C-terminus: MNLNKYIDHTLLKPQATEEDIKKICKEAKEYNFASVCVNTCYTSLVSKELEGTDVTTCVVVGFPLGATTTETKAFEAKQAIEQGAGEVDMVINVGALKSKKYDYVKKDIEAVVEAAKGKALVKVILENCLLEKEEIVKACELSKEAGADFVKTSTGFSTGGAKVEDVKLMRETVGPDMGVKASGAVRTKEDAEAVIAAGANRIGASSSIAIVEGTKSENAGY.

D89 acts as the Proton donor/acceptor in catalysis. K152 (schiff-base intermediate with acetaldehyde) is an active-site residue. K181 (proton donor/acceptor) is an active-site residue.

This sequence belongs to the DeoC/FbaB aldolase family. DeoC type 1 subfamily.

The protein resides in the cytoplasm. It catalyses the reaction 2-deoxy-D-ribose 5-phosphate = D-glyceraldehyde 3-phosphate + acetaldehyde. It participates in carbohydrate degradation; 2-deoxy-D-ribose 1-phosphate degradation; D-glyceraldehyde 3-phosphate and acetaldehyde from 2-deoxy-alpha-D-ribose 1-phosphate: step 2/2. Functionally, catalyzes a reversible aldol reaction between acetaldehyde and D-glyceraldehyde 3-phosphate to generate 2-deoxy-D-ribose 5-phosphate. This is Deoxyribose-phosphate aldolase from Clostridium novyi (strain NT).